A 739-amino-acid chain; its full sequence is Lysyl oxidase homolog 3A (739 aa).

The signal sequence occupies residues 1–25 (MLRSELRDMVVAMVLWGILLPFCLS). 4 consecutive SRCR domains span residues 38–139 (FRLA…VICK), 166–272 (LRPL…VSCV), 293–393 (MRLK…VICN), and 403–511 (MRLT…VICS). Intrachain disulfides connect Cys-64–Cys-128, Cys-77–Cys-138, Cys-108–Cys-118, Cys-196–Cys-261, Cys-209–Cys-271, Cys-238–Cys-248, Cys-318–Cys-382, Cys-331–Cys-392, Cys-362–Cys-372, Cys-433–Cys-497, Cys-446–Cys-510, and Cys-479–Cys-489. The N-linked (GlcNAc...) asparagine glycan is linked to Asn-256. A glycan (N-linked (GlcNAc...) asparagine) is linked at Asn-468. Asn-611 carries N-linked (GlcNAc...) asparagine glycosylation. Residues 620-656 (KASFCLEDTECHEGVSKRYECANFGEQGITVGCWDLY) constitute a cross-link (lysine tyrosylquinone (Lys-Tyr)). Tyr-656 is subject to 2',4',5'-topaquinone.

It belongs to the lysyl oxidase family. Requires Cu cation as cofactor. The cofactor is lysine tyrosylquinone residue. Post-translationally, the lysine tyrosylquinone cross-link (LTQ) is generated by condensation of the epsilon-amino group of a lysine with a topaquinone produced by oxidation of tyrosine.

It is found in the secreted. The protein resides in the extracellular space. Its subcellular location is the cytoplasm. The protein localises to the nucleus. The enzyme catalyses L-lysyl-[protein] + O2 + H2O = (S)-2-amino-6-oxohexanoyl-[protein] + H2O2 + NH4(+). It carries out the reaction N(6)-acetyl-L-lysyl-[protein] + O2 + H2O = acetamide + (S)-2-amino-6-oxohexanoyl-[protein] + H2O2. Functionally, protein-lysine 6-oxidase that mediates the oxidation of peptidyl lysine residues to allysine in target proteins. Catalyzes the post-translational oxidative deamination of peptidyl lysine residues in precursors of elastin and different types of collagens, a prerequisite in the formation of cross-links between collagens and elastin. Can mediate oxidation of lysine residues that are acetylated. Also able to catalyze deacetylation of lysine residues. The protein is Lysyl oxidase homolog 3A of Danio rerio (Zebrafish).